Reading from the N-terminus, the 115-residue chain is Large ribosomal subunit protein bL19 (115 aa).

The protein belongs to the bacterial ribosomal protein bL19 family.

Functionally, this protein is located at the 30S-50S ribosomal subunit interface and may play a role in the structure and function of the aminoacyl-tRNA binding site. The polypeptide is Large ribosomal subunit protein bL19 (Desulforamulus reducens (strain ATCC BAA-1160 / DSM 100696 / MI-1) (Desulfotomaculum reducens)).